The following is a 270-amino-acid chain: 3-methyl-2-oxobutanoate hydroxymethyltransferase (270 aa).

Mg(2+)-binding residues include D41 and D80. 3-methyl-2-oxobutanoate contacts are provided by residues 41–42, D80, and K109; that span reads DS. A Mg(2+)-binding site is contributed by E111. E178 acts as the Proton acceptor in catalysis.

Belongs to the PanB family. In terms of assembly, homodecamer; pentamer of dimers. The cofactor is Mg(2+).

The protein localises to the cytoplasm. It catalyses the reaction 3-methyl-2-oxobutanoate + (6R)-5,10-methylene-5,6,7,8-tetrahydrofolate + H2O = 2-dehydropantoate + (6S)-5,6,7,8-tetrahydrofolate. Its pathway is cofactor biosynthesis; (R)-pantothenate biosynthesis; (R)-pantoate from 3-methyl-2-oxobutanoate: step 1/2. In terms of biological role, catalyzes the reversible reaction in which hydroxymethyl group from 5,10-methylenetetrahydrofolate is transferred onto alpha-ketoisovalerate to form ketopantoate. The chain is 3-methyl-2-oxobutanoate hydroxymethyltransferase from Thermotoga neapolitana (strain ATCC 49049 / DSM 4359 / NBRC 107923 / NS-E).